Reading from the N-terminus, the 128-residue chain is Insulin-like 3 (128 aa).

The signal sequence occupies residues 1-15 (MHALLLLLLLALGSA). 3 disulfides stabilise this stretch: Cys29–Cys113, Cys41–Cys126, and Cys112–Cys117. Residues 81-94 (ALDPDPALDPQLPH) show a composition bias toward low complexity. The segment at 81 to 101 (ALDPDPALDPQLPHQASQRQR) is disordered.

Belongs to the insulin family. In terms of assembly, heterodimer of a B chain and an A chain linked by two disulfide bonds. As to expression, expressed in Leydig cells of the testis, and weakly in the theca interna cells of antral follicles and the corpus luteum of the ovary.

Its subcellular location is the secreted. Functionally, seems to play a role in testicular function. May be a trophic hormone with a role in testicular descent in fetal life. Is a ligand for LGR8 receptor. This is Insulin-like 3 (Insl3) from Rattus norvegicus (Rat).